The following is a 409-amino-acid chain: Phosphatidylglycerol--prolipoprotein diacylglyceryl transferase (409 aa).

The next 4 membrane-spanning stretches (helical) occupy residues 18–38 (PVPL…AVFV), 48–68 (MDPM…IVGA), 93–113 (IWNG…GAWL), and 119–139 (GISL…AQAI). R141 contacts a 1,2-diacyl-sn-glycero-3-phospho-(1'-sn-glycerol). 2 helical membrane-spanning segments follow: residues 177-197 (QPTF…LLVV) and 234-254 (ILGL…ALLA). The tract at residues 273-409 (ALGIARSRPA…AVPPEEPQLP (137 aa)) is disordered. Composition is skewed to low complexity over residues 297–309 (AAAP…DSAA), 320–335 (PDLG…SAGS), and 348–375 (TATT…TATT).

Belongs to the Lgt family.

The protein resides in the cell membrane. It carries out the reaction L-cysteinyl-[prolipoprotein] + a 1,2-diacyl-sn-glycero-3-phospho-(1'-sn-glycerol) = an S-1,2-diacyl-sn-glyceryl-L-cysteinyl-[prolipoprotein] + sn-glycerol 1-phosphate + H(+). Its pathway is protein modification; lipoprotein biosynthesis (diacylglyceryl transfer). In terms of biological role, catalyzes the transfer of the diacylglyceryl group from phosphatidylglycerol to the sulfhydryl group of the N-terminal cysteine of a prolipoprotein, the first step in the formation of mature lipoproteins. This is Phosphatidylglycerol--prolipoprotein diacylglyceryl transferase from Frankia casuarinae (strain DSM 45818 / CECT 9043 / HFP020203 / CcI3).